The chain runs to 163 residues: Nucleotide-binding protein BPUM_1028 (163 aa).

It belongs to the YajQ family.

In terms of biological role, nucleotide-binding protein. The polypeptide is Nucleotide-binding protein BPUM_1028 (Bacillus pumilus (strain SAFR-032)).